Here is a 344-residue protein sequence, read N- to C-terminus: Oxygen sensor histidine kinase NreB (344 aa).

Positions 58, 61, 73, and 76 each coordinate [4Fe-4S] cluster. In terms of domain architecture, Histidine kinase spans 152–344 (RISRELHDSV…GTNVTLNIPI (193 aa)). Residue H158 is modified to Phosphohistidine; by autocatalysis.

Requires [4Fe-4S] cluster as cofactor. Autophosphorylated.

Its subcellular location is the cytoplasm. The catalysed reaction is ATP + protein L-histidine = ADP + protein N-phospho-L-histidine.. Member of the two-component regulatory system NreB/NreC involved in the control of dissimilatory nitrate/nitrite reduction in response to oxygen. NreB functions as a direct oxygen sensor histidine kinase which is autophosphorylated, in the absence of oxygen, probably at the conserved histidine residue, and transfers its phosphate group probably to a conserved aspartate residue of NreC. NreB/NreC activates the expression of the nitrate (narGHJI) and nitrite (nir) reductase operons, as well as the putative nitrate transporter gene narT. The polypeptide is Oxygen sensor histidine kinase NreB (nreB) (Staphylococcus aureus (strain Mu3 / ATCC 700698)).